Reading from the N-terminus, the 450-residue chain is MKVDLPESRLPSLYRDFRPLKDLNPDGYEANISTWRDFFLQQYISNSNRIIFTIGTRTLQELTHEVYGVPKSIDIAIDVLVNEGNLIPMELFNLGGMYTDNSRKGFWKWVRSWKESTNMYKSRKDETNFYLREDKFIIKANLEKEYQRFHELLKRSVFMEASSITDLVFTRNEFVTTESLQSFFSTYDEETKNVFLHFIENYKHIIVSKDNVIKVIAAEVEDITSRFSKGITENDLRIASVKVGIININKQITRLRKEINESNIKLRGPEFNELPKRIRIEYKQARLLSEKHLSRLLKFQNNLAQVRTQIDTSATNAVLIQTLSESNEVIKSINGYIGSTEKVEDLLDEIKEGHDRTEEVNDLLAHYNKGQDEEAEEEIERELEQLELDEKNNNKEENKNQDLHEPKESSSEDLLKRLNNLKINTNEGPVQDNENHDNEIRKIMMEEQPR.

A compositionally biased stretch (basic and acidic residues) spans 387–416 (ELDEKNNNKEENKNQDLHEPKESSSEDLLK). The interval 387–439 (ELDEKNNNKEENKNQDLHEPKESSSEDLLKRLNNLKINTNEGPVQDNENHDNE) is disordered.

This is an uncharacterized protein from Saccharomyces cerevisiae (strain ATCC 204508 / S288c) (Baker's yeast).